The chain runs to 565 residues: Wee1-like protein kinase 2 (565 aa).

The region spanning Phe-217 to Leu-493 is the Protein kinase domain. ATP contacts are provided by residues Ile-223 to Val-231 and Lys-246. Asp-344 functions as the Proton acceptor in the catalytic mechanism. The Mg(2+) site is built by Asn-349 and Asp-383. Residues Ala-496 to Leu-522 adopt a coiled-coil conformation. The tract at residues Pro-531–Gly-553 is disordered.

This sequence belongs to the protein kinase superfamily. Ser/Thr protein kinase family. WEE1 subfamily.

The protein localises to the nucleus. It catalyses the reaction L-tyrosyl-[protein] + ATP = O-phospho-L-tyrosyl-[protein] + ADP + H(+). In terms of biological role, oocyte-specific protein tyrosine kinase that phosphorylates and inhibits CDK1 and acts as a key regulator of meiosis. Required to maintain meiotic arrest in oocytes by phosphorylating CDK1 at 'Tyr-15', leading to inhibit CDK1 activity and prevent meiotic reentry. The polypeptide is Wee1-like protein kinase 2 (WEE2) (Gallus gallus (Chicken)).